The following is a 199-amino-acid chain: Adenylyl-sulfate kinase (199 aa).

Residue 35-42 (GLSGSGKS) participates in ATP binding. The Phosphoserine intermediate role is filled by S109.

Belongs to the APS kinase family.

It carries out the reaction adenosine 5'-phosphosulfate + ATP = 3'-phosphoadenylyl sulfate + ADP + H(+). Its pathway is sulfur metabolism; hydrogen sulfide biosynthesis; sulfite from sulfate: step 2/3. In terms of biological role, catalyzes the synthesis of activated sulfate. This is Adenylyl-sulfate kinase from Clostridium kluyveri (strain ATCC 8527 / DSM 555 / NBRC 12016 / NCIMB 10680 / K1).